The sequence spans 133 residues: Snaclec echicetin subunit alpha (133 aa).

Cystine bridges form between C4–C15, C31–C127, and C102–C119. A C-type lectin domain is found at 11–128 (YEGHCYQLFR…CEFKFPFVCK (118 aa)).

The protein belongs to the snaclec family. In terms of assembly, heterodimer of subunits alpha and beta; disulfide-linked. Forms an active complex with the pentameric immunoglobuline Mkappa (IgMkappa). Expressed by the venom gland.

The protein resides in the secreted. Its function is as follows. Echicetin itself inhibits aggregation of washed platelets induced by vWF, thrombin or alboaggregin-A. However, when complexed with the pentameric plasma immunoglobulin Mkappa (IgMkappa), echicetin binds specifically to GPIb and activates platelets. This is caused by P-selectin expression and activation of alpha-IIb/beta-3 as well as tyrosine phosphorylation of several signal transduction molecules, including p53/56(LYN), p64, p72(SYK), p70 to p90, and p120. In vivo, it induces thrombocytopenia when injected into mice, probably accounting of activation of platelets rather than inhibition. This is Snaclec echicetin subunit alpha from Echis carinatus sochureki (Saw-scaled viper).